The following is a 711-amino-acid chain: Hepatocyte growth factor-like protein (711 aa).

The N-terminal stretch at 1–18 (MGWLPLLLLLTQCLGVPG) is a signal peptide. The PAN domain occupies 21–105 (SPLNDFQVLR…GRCDLFQKKD (85 aa)). 20 disulfide bridges follow: Cys56/Cys78, Cys60/Cys66, Cys110/Cys186, Cys131/Cys169, Cys157/Cys181, Cys191/Cys268, Cys194/Cys324, Cys212/Cys251, Cys240/Cys263, Cys283/Cys361, Cys304/Cys343, Cys332/Cys355, Cys370/Cys448, Cys391/Cys431, Cys419/Cys443, Cys468/Cys588, Cys507/Cys523, Cys602/Cys667, Cys632/Cys646, and Cys657/Cys685. Asn72 is a glycosylation site (N-linked (GlcNAc...) asparagine). 4 Kringle domains span residues 110-186 (CIMN…IKSC), 191-268 (CVWC…LPRC), 283-361 (CFRG…IRRC), and 370-448 (CYHG…LRRC). Asn296 carries an N-linked (GlcNAc...) asparagine glycan. The Peptidase S1 domain occupies 484-709 (VVGGHPGNSP…FVDWIHKVMR (226 aa)). N-linked (GlcNAc...) asparagine glycosylation is present at Asn615.

It belongs to the peptidase S1 family. Plasminogen subfamily. In terms of assembly, dimer of an alpha chain and a beta chain linked by a disulfide bond. Interacts (via beta chain) with MST1R (via SEMA domain). Cleaved after Arg-483, probably by HPN/Hepsin, to yield the active form consisting of two disulfide-linked chains.

It is found in the secreted. This Homo sapiens (Human) protein is Hepatocyte growth factor-like protein (MST1).